The sequence spans 481 residues: Aspartyl/glutamyl-tRNA(Asn/Gln) amidotransferase subunit B (481 aa).

The protein belongs to the GatB/GatE family. GatB subfamily. In terms of assembly, heterotrimer of A, B and C subunits.

It carries out the reaction L-glutamyl-tRNA(Gln) + L-glutamine + ATP + H2O = L-glutaminyl-tRNA(Gln) + L-glutamate + ADP + phosphate + H(+). The catalysed reaction is L-aspartyl-tRNA(Asn) + L-glutamine + ATP + H2O = L-asparaginyl-tRNA(Asn) + L-glutamate + ADP + phosphate + 2 H(+). In terms of biological role, allows the formation of correctly charged Asn-tRNA(Asn) or Gln-tRNA(Gln) through the transamidation of misacylated Asp-tRNA(Asn) or Glu-tRNA(Gln) in organisms which lack either or both of asparaginyl-tRNA or glutaminyl-tRNA synthetases. The reaction takes place in the presence of glutamine and ATP through an activated phospho-Asp-tRNA(Asn) or phospho-Glu-tRNA(Gln). The chain is Aspartyl/glutamyl-tRNA(Asn/Gln) amidotransferase subunit B from Pseudomonas syringae pv. tomato (strain ATCC BAA-871 / DC3000).